Consider the following 347-residue polypeptide: Heat-inducible transcription repressor HrcA (347 aa).

It belongs to the HrcA family.

Functionally, negative regulator of class I heat shock genes (grpE-dnaK-dnaJ and groELS operons). Prevents heat-shock induction of these operons. The chain is Heat-inducible transcription repressor HrcA from Desulforamulus reducens (strain ATCC BAA-1160 / DSM 100696 / MI-1) (Desulfotomaculum reducens).